We begin with the raw amino-acid sequence, 386 residues long: MDICVRPVWAEIDLDIIANNMKEIRNLVGEKEIIAVVKANAYGHGALDIASTLLENGASRLAVAIITEADELRDAGITAPIMILGYTPINFAENLINNEIEQTVYDVEYAKELSDFALKLGKKAKVHIAIDTGMGRIGFLPNEEGLNKVLEICSLPGVEVIGLFTHFSTSDEKDKTYTYEQFSKLTAFNKALEDNGIHIPLKHASNSGAIMDLPETYLDGVRCGIISYGYYPSEEVKKENLKLKPALTLKTNVAFVKELDEDMYVSYGRTYKTEKKSKIATLPIGYADGYSRLLSGKAKVIIKGQFANVIGRVCMDQCMIDVTHIEDVKIGDEVILLGEENGLKFDANDMAEIMGTINYEILCMISHRVPRIYKKNNEIVKVINYI.

Lys38 serves as the catalytic Proton acceptor; specific for D-alanine. Residue Lys38 is modified to N6-(pyridoxal phosphate)lysine. Position 136 (Arg136) interacts with substrate. The active-site Proton acceptor; specific for L-alanine is Tyr267. Met315 is a binding site for substrate.

It belongs to the alanine racemase family. Pyridoxal 5'-phosphate is required as a cofactor.

It carries out the reaction L-alanine = D-alanine. It participates in amino-acid biosynthesis; D-alanine biosynthesis; D-alanine from L-alanine: step 1/1. Its function is as follows. Catalyzes the interconversion of L-alanine and D-alanine. May also act on other amino acids. This is Alanine racemase (alr) from Clostridium perfringens (strain ATCC 13124 / DSM 756 / JCM 1290 / NCIMB 6125 / NCTC 8237 / Type A).